A 390-amino-acid chain; its full sequence is Galactokinase (390 aa).

Residue 33–36 participates in substrate binding; the sequence is EHTD. Residues Ser67 and 124 to 130 contribute to the ATP site; that span reads GAGLSSS. Ser130 and Glu162 together coordinate Mg(2+). The Proton acceptor role is filled by Asp174. Tyr224 is a binding site for substrate.

It belongs to the GHMP kinase family. GalK subfamily.

The protein resides in the cytoplasm. The catalysed reaction is alpha-D-galactose + ATP = alpha-D-galactose 1-phosphate + ADP + H(+). Its pathway is carbohydrate metabolism; galactose metabolism. Functionally, catalyzes the transfer of the gamma-phosphate of ATP to D-galactose to form alpha-D-galactose-1-phosphate (Gal-1-P). The chain is Galactokinase from Exiguobacterium sibiricum (strain DSM 17290 / CCUG 55495 / CIP 109462 / JCM 13490 / 255-15).